Reading from the N-terminus, the 439-residue chain is D-inositol 3-phosphate glycosyltransferase (439 aa).

His21 is a 1D-myo-inositol 3-phosphate binding site. UDP-N-acetyl-alpha-D-glucosamine contacts are provided by residues 27 to 28 and Gly35; that span reads QP. 1D-myo-inositol 3-phosphate-binding positions include 32-37, Lys90, Tyr123, Thr147, and Arg167; that span reads DAGGMN. Residues Arg241, Lys246, and Gln299 each contribute to the UDP-N-acetyl-alpha-D-glucosamine site. Positions 308, 309, and 311 each coordinate Mg(2+). UDP-N-acetyl-alpha-D-glucosamine contacts are provided by Glu321 and Glu329. Thr335 is a Mg(2+) binding site.

It belongs to the glycosyltransferase group 1 family. MshA subfamily. In terms of assembly, homodimer.

It carries out the reaction 1D-myo-inositol 3-phosphate + UDP-N-acetyl-alpha-D-glucosamine = 1D-myo-inositol 2-acetamido-2-deoxy-alpha-D-glucopyranoside 3-phosphate + UDP + H(+). Its function is as follows. Catalyzes the transfer of a N-acetyl-glucosamine moiety to 1D-myo-inositol 3-phosphate to produce 1D-myo-inositol 2-acetamido-2-deoxy-glucopyranoside 3-phosphate in the mycothiol biosynthesis pathway. This is D-inositol 3-phosphate glycosyltransferase from Mycobacterium sp. (strain KMS).